Here is a 490-residue protein sequence, read N- to C-terminus: MSHPALFINGAWQQGRGAEFSKTDPVDNQPLWQANAADGSDVAAACEAARAAFPAWARTPFEQREQLVKRFAALLEEHKSHLAATISRETSKPRWETLTEVQAMIGKVAISLQAYQVRTGVSQTAMADGASVLRHRPHGVLAVFGPYNFPGHLPNGHIVPALLAGNTVVFKPSELTPQTAEETLKLWQQAGLPDGVINMVQGGRETGEALAASTDIDGLLFTGSAGTGYHLHRQLAGQPEKILALEMGGNNALIVDQIEDCDAAVNLAIQSAFISAGQRCTCSRRILVKRGSEGDAFIERLVQVASALRIGRWDAEPQPFMGGVISSAAAEKMLAAQHHLLSLGGKALLTMQRLESGSALLSPGIIDVTGVRDVPDEEYFGPLTTIIRYNDFDEAVRIANQTRYGLSVGLVSPQRERFDHLLLEARAGIVNWNKPLTGASSAAPFGGVGASGNHRPSAYYAADYCAWPMASLESESLTLPASLSPGLSFN.

An NAD(+)-binding site is contributed by 223 to 228 (GSAGTG). Active-site residues include E246 and C280.

The protein belongs to the aldehyde dehydrogenase family. AstD subfamily.

It catalyses the reaction N-succinyl-L-glutamate 5-semialdehyde + NAD(+) + H2O = N-succinyl-L-glutamate + NADH + 2 H(+). Its pathway is amino-acid degradation; L-arginine degradation via AST pathway; L-glutamate and succinate from L-arginine: step 4/5. Catalyzes the NAD-dependent reduction of succinylglutamate semialdehyde into succinylglutamate. The sequence is that of N-succinylglutamate 5-semialdehyde dehydrogenase from Serratia proteamaculans (strain 568).